Reading from the N-terminus, the 119-residue chain is Large ribosomal subunit protein uL18 (119 aa).

This sequence belongs to the universal ribosomal protein uL18 family. As to quaternary structure, part of the 50S ribosomal subunit; part of the 5S rRNA/L5/L18/L25 subcomplex. Contacts the 5S and 23S rRNAs.

Its function is as follows. This is one of the proteins that bind and probably mediate the attachment of the 5S RNA into the large ribosomal subunit, where it forms part of the central protuberance. In Oceanobacillus iheyensis (strain DSM 14371 / CIP 107618 / JCM 11309 / KCTC 3954 / HTE831), this protein is Large ribosomal subunit protein uL18.